We begin with the raw amino-acid sequence, 162 residues long: Crossover junction endodeoxyribonuclease RuvC (162 aa).

Active-site residues include Asp-8, Glu-69, and His-141. Residues Asp-8, Glu-69, and His-141 each contribute to the Mg(2+) site.

Belongs to the RuvC family. In terms of assembly, homodimer which binds Holliday junction (HJ) DNA. The HJ becomes 2-fold symmetrical on binding to RuvC with unstacked arms; it has a different conformation from HJ DNA in complex with RuvA. In the full resolvosome a probable DNA-RuvA(4)-RuvB(12)-RuvC(2) complex forms which resolves the HJ. Requires Mg(2+) as cofactor.

The protein resides in the cytoplasm. The enzyme catalyses Endonucleolytic cleavage at a junction such as a reciprocal single-stranded crossover between two homologous DNA duplexes (Holliday junction).. Its function is as follows. The RuvA-RuvB-RuvC complex processes Holliday junction (HJ) DNA during genetic recombination and DNA repair. Endonuclease that resolves HJ intermediates. Cleaves cruciform DNA by making single-stranded nicks across the HJ at symmetrical positions within the homologous arms, yielding a 5'-phosphate and a 3'-hydroxyl group; requires a central core of homology in the junction. The consensus cleavage sequence is 5'-(A/T)TT(C/G)-3'. Cleavage occurs on the 3'-side of the TT dinucleotide at the point of strand exchange. HJ branch migration catalyzed by RuvA-RuvB allows RuvC to scan DNA until it finds its consensus sequence, where it cleaves and resolves the cruciform DNA. In Wolbachia sp. subsp. Brugia malayi (strain TRS), this protein is Crossover junction endodeoxyribonuclease RuvC.